The following is an 89-amino-acid chain: Small ribosomal subunit protein uS15 (89 aa).

Belongs to the universal ribosomal protein uS15 family. Part of the 30S ribosomal subunit. Forms a bridge to the 50S subunit in the 70S ribosome, contacting the 23S rRNA.

One of the primary rRNA binding proteins, it binds directly to 16S rRNA where it helps nucleate assembly of the platform of the 30S subunit by binding and bridging several RNA helices of the 16S rRNA. Functionally, forms an intersubunit bridge (bridge B4) with the 23S rRNA of the 50S subunit in the ribosome. This chain is Small ribosomal subunit protein uS15, found in Vibrio atlanticus (strain LGP32) (Vibrio splendidus (strain Mel32)).